Reading from the N-terminus, the 534-residue chain is High-affinity nicotinic acid transporter (534 aa).

Residues 1-130 are Extracellular-facing; sequence MSNKFTMESP…DIHLVGTQYN (130 aa). Positions 21–56 are disordered; sequence SPTNDGSEEKPTEVTFQEDEGHDASLHNRSHDKKSE. S27 carries the phosphoserine modification. A helical membrane pass occupies residues 131 to 151; it reads TCVTVFFATYVLFDPIGTNLL. Position 152 (K152) is a topological domain, cytoplasmic. The helical transmembrane segment at 153-173 threads the bilayer; the sequence is IMGPPLMMSICLTCFGAISLG. At 174-187 the chain is on the extracellular side; that stretch reads TAWVKNYAQLIVVR. A helical transmembrane segment spans residues 188–208; it reads LLLGAFEGMIYPAINMYLSVC. The Cytoplasmic segment spans residues 209-217; the sequence is YRREQYALR. The chain crosses the membrane as a helical span at residues 218–238; that stretch reads FAFVFSAACLSSSFGGLIAYG. Residues 239–250 are Extracellular-facing; that stretch reads CSKISGSLKDWQ. Residues 251 to 271 form a helical membrane-spanning segment; the sequence is YIYIVEGCISLGFVPFYAFGL. At 272-323 the chain is on the cytoplasmic side; the sequence is SKNLEDSWFFNKEEKEYISERYKTMNTFDPDEKFEWFQVWQAVKDVKTWASA. A Glycyl lysine isopeptide (Lys-Gly) (interchain with G-Cter in ubiquitin) cross-link involves residue K283. Residues 324–344 form a helical membrane-spanning segment; that stretch reads VALFGIDLTTFGLTVFLPIII. Residues 345–355 lie on the Extracellular side of the membrane; it reads TSMGFTNVRAQ. The chain crosses the membrane as a helical span at residues 356–376; the sequence is LMTVPIYFLTAIVFFICAVWS. Topologically, residues 377–384 are cytoplasmic; it reads DRIKLRSP. A helical transmembrane segment spans residues 385–405; sequence FILGACLTTSIGIAIVLGSQV. Residues 406–410 are Extracellular-facing; that stretch reads HGVRY. A helical membrane pass occupies residues 411–431; that stretch reads FGVYILCMGIYVNAACNCLWL. The Cytoplasmic segment spans residues 432 to 444; sequence SGNTGNYFKRATA. The helical transmembrane segment at 445–465 threads the bilayer; sequence LGINLFFGSGSGLVSGQIFVA. The Extracellular segment spans residues 466–474; the sequence is KDKPRYIKG. The helical transmembrane segment at 475 to 495 threads the bilayer; sequence LSISLAFQVFSIFMTVVQIFL. The Cytoplasmic portion of the chain corresponds to 496–534; the sequence is YKRENDKKKAIIDRCNELGEPIPYDERLSDKNPEFKYMY.

The protein belongs to the major facilitator superfamily. Allantoate permease family.

It localises to the membrane. Its function is as follows. Involved in the uptake of nicotinic acid. In Saccharomyces cerevisiae (strain ATCC 204508 / S288c) (Baker's yeast), this protein is High-affinity nicotinic acid transporter (TNA1).